The primary structure comprises 599 residues: Omega-hydroxyceramide transacylase (599 aa).

Residues 16–185 enclose the PNPLA domain; that stretch reads ISFSGSGFLS…TSMQPCSFWT (170 aa). The GXSXG motif lies at 51-55; sequence GTSAG. S53 serves as the catalytic Nucleophile. Catalysis depends on D172, which acts as the Proton acceptor. The DGA/G signature appears at 172-174; it reads DGG. The disordered stretch occupies residues 289–563; it reads PPPPSLQNLP…PASKLKSAPC (275 aa). 2 stretches are compositionally biased toward polar residues: residues 325 to 335 and 350 to 362; these read SSAAPSVQTPE and VSIS…SPLS. Residues 443–454 show a composition bias toward low complexity; the sequence is SPESPRLLLRSS. Residues 468–478 are compositionally biased toward pro residues; sequence PLSPSTPPAGP. Positions 490 to 501 are enriched in polar residues; that stretch reads ATGSPALSQLTG. The span at 551–563 shows a compositional bias: low complexity; it reads SKKPASKLKSAPC.

In terms of tissue distribution, specifically expressed in skin by keratinocytes, at the boundary area between the nucleated stratum granulosum and the denucleated stratum corneum in the epidermis (at protein level). Also expressed in stomach and other surface lining tissues like intestine and tongue. Also detected in testis as well as in other tissues but at very low level.

Its subcellular location is the cytoplasm. The enzyme catalyses an N-(omega-hydroxy-ultra-long chain fatty acyl)-sphingoid base + a (9Z,12Z)-octadecadienoyl-containing triacyl-sn-glycerol = an N-[omega-(9Z,12Z-octadecadienoyloxy)-O-ultra-long chain fatty acyl]-sphingoid base + a diacylglycerol. It carries out the reaction an N-(omega-hydroxy-ultra-long chain fatty acyl)-sphing-4-enine + a (9Z,12Z)-octadecadienoyl-containing triacyl-sn-glycerol = an N-(omega-(9Z,12Z-octadecadienoyloxy)-ultra-long chain fatty acyl)-sphing-4-enine + a diacylglycerol. It catalyses the reaction N-(28-hydroxyoctacosanoyl)-sphing-4-enine + a (9Z,12Z)-octadecadienoyl-containing triacyl-sn-glycerol = N-(28-(9Z,12Z-octadecadienoyloxy)-octacosanoyl)-sphing-4-enine + a diacylglycerol. The catalysed reaction is N-(30-hydroxytriacontanoyl)-sphing-4-enine + 1,2,3-tri-(9Z,12Z)-octadecadienoylglycerol = N-[30-(9Z,12Z-octadecadienoyloxy)-triacontanoyl]-sphing-4-enine + di-(9Z,12Z)-octadecadienoylglycerol. The enzyme catalyses N-(32-hydroxydotriacontanoyl)-sphing-4-enine + a (9Z,12Z)-octadecadienoyl-containing triacyl-sn-glycerol = N-(32-(9Z,12Z-octadecadienoyloxy)-dotricontanoyl)-sphing-4-enine + a diacylglycerol. It carries out the reaction N-(32-hydroxydotriacontenoyl)-sphing-4-enine + a (9Z,12Z)-octadecadienoyl-containing triacyl-sn-glycerol = an N-(32-(9Z,12Z-octadecadienoyloxy)-dotriacontenoyl)-sphing-4-enine + a diacylglycerol. It catalyses the reaction an N-(34-hydroxytetratriacontenoyl)-sphing-4-enine + a (9Z,12Z)-octadecadienoyl-containing triacyl-sn-glycerol = an N-(34-(9Z,12Z-octadecadienoyloxy)-tetratriacontenoyl)-sphing-4-enine + a diacylglycerol. The catalysed reaction is an N-(34-hydroxytetratriacontadienoyl)-sphing-4-enine + a (9Z,12Z)-octadecadienoyl-containing triacyl-sn-glycerol = an N-(34-(9Z,12Z-octadecadienoyloxy)-tetratriacontadienoyl)-sphing-4-enine + a diacylglycerol. The enzyme catalyses an N-(36-hydroxyhexatriacontenoyl)-sphing-4-enine + a (9Z,12Z)-octadecadienoyl-containing triacyl-sn-glycerol = an N-(36-(9Z,12Z-octadecadienoyloxy)-hexatriacontenoyl)-sphing-4-enine + a diacylglycerol. It carries out the reaction an N-(36-hydroxyhexatriacontadienoyl)-sphing-4-enine + a (9Z,12Z)-octadecadienoyl-containing triacyl-sn-glycerol = an N-(36-(9Z,12Z-octadecadienoyloxy)-hexatriacontadienoyl)-sphing-4-enine + a diacylglycerol. It catalyses the reaction an N-(38-hydroxyoctatriacontenoyl)-sphing-4-enine + a (9Z,12Z)-octadecadienoyl-containing triacyl-sn-glycerol = an N-(38-(9Z,12Z-octadecadienoyloxy)-octatriacontenoyl)-sphing-4-enine + a diacylglycerol. Its function is as follows. Omega-hydroxyceramide transacylase involved in the synthesis of omega-O-acylceramides (esterified omega-hydroxyacyl-sphingosine; EOS), which are extremely hydrophobic lipids involved in skin barrier formation. Catalyzes the last step of the synthesis of omega-O-acylceramides by transferring linoleic acid from triglycerides to an omega-hydroxyceramide. Omega-O-acylceramides, are required for the biogenesis of lipid lamellae in the stratum corneum and the formation of the cornified lipid envelope which are essential for the epidermis barrier function. These lipids also play a role in keratinocyte differentiation. May also act on omega-hydroxylated ultra-long chain fatty acids (omega-OH ULCFA) and acylglucosylceramides (GlcEOS). This chain is Omega-hydroxyceramide transacylase, found in Mus musculus (Mouse).